A 507-amino-acid polypeptide reads, in one-letter code: Histidine ammonia-lyase (507 aa).

The 5-imidazolinone (Ala-Gly) cross-link spans 141–143; sequence ASG. Ser-142 is modified (2,3-didehydroalanine (Ser)).

This sequence belongs to the PAL/histidase family. Post-translationally, contains an active site 4-methylidene-imidazol-5-one (MIO), which is formed autocatalytically by cyclization and dehydration of residues Ala-Ser-Gly.

Its subcellular location is the cytoplasm. The enzyme catalyses L-histidine = trans-urocanate + NH4(+). It participates in amino-acid degradation; L-histidine degradation into L-glutamate; N-formimidoyl-L-glutamate from L-histidine: step 1/3. This chain is Histidine ammonia-lyase, found in Burkholderia cenocepacia (strain ATCC BAA-245 / DSM 16553 / LMG 16656 / NCTC 13227 / J2315 / CF5610) (Burkholderia cepacia (strain J2315)).